The sequence spans 145 residues: Probable DNA-directed RNA polymerases I and III subunit RPAC2 (145 aa).

A disordered region spans residues 1 to 52; it reads MGKKSEKKVVEETMEVDEQPAVEPEAVPEEEPEVEDEDLNVPKKKKMEILDP. Over residues 12–39 the composition is skewed to acidic residues; sequence ETMEVDEQPAVEPEAVPEEEPEVEDEDL.

Belongs to the archaeal Rpo11/eukaryotic RPB11/RPC19 RNA polymerase subunit family. In terms of assembly, component of the RNA polymerase I (Pol I) and RNA polymerase III (Pol III) complexes consisting of at least 13 and 17 subunits, respectively.

It localises to the nucleus. Functionally, DNA-dependent RNA polymerase catalyzes the transcription of DNA into RNA using the four ribonucleoside triphosphates as substrates. Common core component of RNA polymerases I and III which synthesize ribosomal RNA precursors and small RNAs, such as 5S rRNA and tRNAs, respectively. In Caenorhabditis briggsae, this protein is Probable DNA-directed RNA polymerases I and III subunit RPAC2 (rpac-19).